A 227-amino-acid polypeptide reads, in one-letter code: Uridylate kinase (227 aa).

9 to 10 provides a ligand contact to ATP; that stretch reads GS. Gly-44 is a binding site for UMP. Positions 45 and 49 each coordinate ATP. Residues Asp-66 and 114–120 each bind UMP; that span reads TVPGHTT. 3 residues coordinate ATP: Thr-140, Phe-146, and Asp-149.

This sequence belongs to the UMP kinase family. In terms of assembly, homohexamer.

It is found in the cytoplasm. The catalysed reaction is UMP + ATP = UDP + ADP. It functions in the pathway pyrimidine metabolism; CTP biosynthesis via de novo pathway; UDP from UMP (UMPK route): step 1/1. With respect to regulation, inhibited by UTP. Catalyzes the reversible phosphorylation of UMP to UDP. The protein is Uridylate kinase of Natronomonas pharaonis (strain ATCC 35678 / DSM 2160 / CIP 103997 / JCM 8858 / NBRC 14720 / NCIMB 2260 / Gabara) (Halobacterium pharaonis).